Consider the following 325-residue polypeptide: Phenylalanine--tRNA ligase alpha subunit (325 aa).

Glutamate 251 is a Mg(2+) binding site.

The protein belongs to the class-II aminoacyl-tRNA synthetase family. Phe-tRNA synthetase alpha subunit type 1 subfamily. As to quaternary structure, tetramer of two alpha and two beta subunits. Mg(2+) is required as a cofactor.

Its subcellular location is the cytoplasm. The catalysed reaction is tRNA(Phe) + L-phenylalanine + ATP = L-phenylalanyl-tRNA(Phe) + AMP + diphosphate + H(+). This chain is Phenylalanine--tRNA ligase alpha subunit, found in Thermotoga neapolitana (strain ATCC 49049 / DSM 4359 / NBRC 107923 / NS-E).